We begin with the raw amino-acid sequence, 173 residues long: Ribosome maturation factor RimM (173 aa).

In terms of domain architecture, PRC barrel spans 92–165 (EGEFYHADLI…RVVIEAPAEI (74 aa)).

It belongs to the RimM family. Binds ribosomal protein uS19.

The protein localises to the cytoplasm. In terms of biological role, an accessory protein needed during the final step in the assembly of 30S ribosomal subunit, possibly for assembly of the head region. Essential for efficient processing of 16S rRNA. May be needed both before and after RbfA during the maturation of 16S rRNA. It has affinity for free ribosomal 30S subunits but not for 70S ribosomes. This chain is Ribosome maturation factor RimM, found in Nitrobacter winogradskyi (strain ATCC 25391 / DSM 10237 / CIP 104748 / NCIMB 11846 / Nb-255).